Reading from the N-terminus, the 401-residue chain is Nicotinate phosphoribosyltransferase (401 aa).

Residue H224 is modified to Phosphohistidine; by autocatalysis.

It belongs to the NAPRTase family. Transiently phosphorylated on a His residue during the reaction cycle. Phosphorylation strongly increases the affinity for substrates and increases the rate of nicotinate D-ribonucleotide production. Dephosphorylation regenerates the low-affinity form of the enzyme, leading to product release.

The enzyme catalyses nicotinate + 5-phospho-alpha-D-ribose 1-diphosphate + ATP + H2O = nicotinate beta-D-ribonucleotide + ADP + phosphate + diphosphate. Its pathway is cofactor biosynthesis; NAD(+) biosynthesis; nicotinate D-ribonucleotide from nicotinate: step 1/1. In terms of biological role, catalyzes the synthesis of beta-nicotinate D-ribonucleotide from nicotinate and 5-phospho-D-ribose 1-phosphate at the expense of ATP. This chain is Nicotinate phosphoribosyltransferase, found in Pseudomonas putida (strain ATCC 700007 / DSM 6899 / JCM 31910 / BCRC 17059 / LMG 24140 / F1).